The sequence spans 1621 residues: ALK tyrosine kinase receptor (1621 aa).

An N-terminal signal peptide occupies residues 1 to 18; sequence MGAAGFLWLLPPLLLAAA. Topologically, residues 19–1042 are extracellular; it reads SYSGAATDQR…PHLPLSLILS (1024 aa). The interval 48 to 70 is heparin-binding region; it reads RLQRKSLAVDFVVPSLFRVYARD. Asn-174, Asn-248, Asn-289, Asn-328, Asn-415, Asn-428, Asn-449, Asn-567, Asn-575, Asn-631, and Asn-673 each carry an N-linked (GlcNAc...) asparagine glycan. In terms of domain architecture, MAM 1 spans 268 to 431; it reads LECSFDFPCE…DFFALKNCSE (164 aa). The LDL-receptor class A domain occupies 441 to 477; that stretch reads LQSSFTCWNGTVLQLGQACDFHQDCAQGEDEGQLCSK. The 159-residue stretch at 482–640 folds into the MAM 2 domain; sequence FYCNFENGFC…NISISLDCYL (159 aa). Cys-692 and Cys-705 are disulfide-bonded. Residue Asn-713 is glycosylated (N-linked (GlcNAc...) asparagine). Cys-787 and Cys-798 are oxidised to a cystine. 3 N-linked (GlcNAc...) asparagine glycosylation sites follow: Asn-812, Asn-868, and Asn-890. Cys-910 and Cys-932 are joined by a disulfide. Asn-990 is a glycosylation site (N-linked (GlcNAc...) asparagine). Disulfide bonds link Cys-991-Cys-999, Cys-994-Cys-1010, and Cys-1012-Cys-1025. An EGF-like region spans residues 991–1029; it reads CSHCEVDECHMDPESHKVICFCDHGTVLADDGVSCIVSP. Residues 1043 to 1063 form a helical membrane-spanning segment; sequence VVTSALVAALVLAFSGIMIVY. Topologically, residues 1064–1621 are cytoplasmic; that stretch reads RRKHQELQAM…SKNKVTQPGP (558 aa). A phosphotyrosine mark is found at Tyr-1082, Tyr-1096, and Tyr-1100. Residues 1120–1396 form the Protein kinase domain; the sequence is ITLIRGLGHG…IEYCTQDPDV (277 aa). Residues 1126-1134 and His-1128 contribute to the ATP site; that span reads LGHGAFGEV. A Phosphotyrosine modification is found at Tyr-1135. Residues Lys-1154 and 1201 to 1203 contribute to the ATP site; that span reads ELM. Catalysis depends on Asp-1253, which acts as the Proton acceptor. Position 1274 (Asp-1274) interacts with ATP. The residue at position 1282 (Tyr-1282) is a Phosphotyrosine. The disordered stretch occupies residues 1412 to 1556; the sequence is EEKVPMRPKD…WTGPGAGPRR (145 aa). Over residues 1414–1423 the composition is skewed to basic and acidic residues; that stretch reads KVPMRPKDPE. Low complexity predominate over residues 1441-1461; sequence SAAPQPAALTAPGPSVKKPPG. A compositionally biased stretch (gly residues) spans 1462–1472; sequence AGAGAGAGAGA. Residues 1506-1518 show a composition bias toward polar residues; that stretch reads NKPTSLWNPTYGS. Tyr-1516 carries the phosphotyrosine modification. The segment covering 1543 to 1552 has biased composition (gly residues); sequence AEGGWTGPGA.

Belongs to the protein kinase superfamily. Tyr protein kinase family. Insulin receptor subfamily. As to quaternary structure, homodimer; homodimerizes following heparin- and ligand-binding. Interacts with CBL, IRS1, PIK3R1 and PLCG1. Interacts with FRS2 and SHC1. Interacts with PTN and MDK. Phosphorylated at tyrosine residues by autocatalysis, which activates kinase activity. In cells not stimulated by a ligand, receptor protein tyrosine phosphatase beta and zeta complex (PTPRB/PTPRZ1) dephosphorylates ALK at the sites in ALK that are undergoing autophosphorylation through autoactivation. In terms of tissue distribution, mainly expressed in central nervous system (CNS) and other parts of the brain such as the paraventricular nucleus (PVN) of the hypothalamus. Expression is also found in peripheral nervous systems, eye, nasal epithelium, olfactory nerve, tongue, skin, tissue surrounding the esophagus, stomach, midgut, as well as testis and ovary.

It is found in the cell membrane. It carries out the reaction L-tyrosyl-[protein] + ATP = O-phospho-L-tyrosyl-[protein] + ADP + H(+). Activated upon ALKAL2 ligand-binding. ALKAL2-driven activation is coupled with heparin-binding. Following ligand-binding, homodimerizes and autophosphorylates, activating its kinase activity. Inactivated through dephosphorylation by receptor protein tyrosine phosphatase beta and zeta complex (PTPRB/PTPRZ1) when there is no stimulation by a ligand. In terms of biological role, neuronal receptor tyrosine kinase that is essentially and transiently expressed in specific regions of the central and peripheral nervous systems and plays an important role in the genesis and differentiation of the nervous system. Also acts as a key thinness protein involved in the resistance to weight gain: in hypothalamic neurons, controls energy expenditure acting as a negative regulator of white adipose tissue lipolysis and sympathetic tone to fine-tune energy homeostasis. Following activation by ALKAL2 ligand at the cell surface, transduces an extracellular signal into an intracellular response. In contrast, ALKAL1 is not a potent physiological ligand for ALK. Ligand-binding to the extracellular domain induces tyrosine kinase activation, leading to activation of the mitogen-activated protein kinase (MAPK) pathway. Phosphorylates almost exclusively at the first tyrosine of the Y-x-x-x-Y-Y motif. Induces tyrosine phosphorylation of CBL, FRS2, IRS1 and SHC1, as well as of the MAP kinases MAPK1/ERK2 and MAPK3/ERK1. ALK activation may also be regulated by pleiotrophin (PTN) and midkine (MDK). PTN-binding induces MAPK pathway activation, which is important for the anti-apoptotic signaling of PTN and regulation of cell proliferation. MDK-binding induces phosphorylation of the ALK target insulin receptor substrate (IRS1), activates mitogen-activated protein kinases (MAPKs) and PI3-kinase, resulting also in cell proliferation induction. Drives NF-kappa-B activation, probably through IRS1 and the activation of the AKT serine/threonine kinase. Recruitment of IRS1 to activated ALK and the activation of NF-kappa-B are essential for the autocrine growth and survival signaling of MDK. The chain is ALK tyrosine kinase receptor from Mus musculus (Mouse).